The following is a 458-amino-acid chain: Tetracycline resistance protein (458 aa).

The next 12 helical transmembrane spans lie at 12–33, 81–100, 111–129, 140–162, 165–185, 201–221, 223–240, 256–276, 297–317, 324–344, 346–365, and 432–451; these read HNQVLIWLCVLSFFSVLNEMVL, LLLFGIMVNGLGSIIGFVGH, FIQGIGAAAFPALVMVVVA, AFGLIGSLVAMGEGVGPAIGGMV, YIHWSYLLLIPTATIITVPFL, MAGIILMSAGIVFFMLFTTSY, FSFLIISILAFFIFVQHI, VFFVIGTLCGGLIFGTVAGFV, GIIFPGTMSVIIFGYIGGLLV, YVLTIGSALLSSGFLIAAFFI, AAPWIMTIIVIFVFGGLSFT, and MLILFAGIIVICWLVILNVY.

Belongs to the major facilitator superfamily. TCR/Tet family.

Its subcellular location is the cell membrane. Its function is as follows. Resistance to tetracycline by an active tetracycline efflux. This is an energy-dependent process that decreases the accumulation of the antibiotic in whole cells. This protein functions as a metal-tetracycline/H(+) antiporter. In Bacillus subtilis (strain 168), this protein is Tetracycline resistance protein (tetB).